The following is a 148-amino-acid chain: Large ribosomal subunit protein bL9 (148 aa).

The protein belongs to the bacterial ribosomal protein bL9 family.

In terms of biological role, binds to the 23S rRNA. This chain is Large ribosomal subunit protein bL9, found in Coprothermobacter proteolyticus (strain ATCC 35245 / DSM 5265 / OCM 4 / BT).